The primary structure comprises 164 residues: Anthrone oxygenase AgnL2 (164 aa).

Transmembrane regions (helical) follow at residues 11–31 (VVTGSFLSGAMISLSLMAVPV), 48–70 (RMYHYGHQVLPTMAVATTLLYAY), and 85–105 (VFALAGTITVSMIPFTWLCMV).

This sequence belongs to the anthrone oxygenase family.

It is found in the membrane. The enzyme catalyses emodin anthrone + O2 = emodin + H2O + H(+). It participates in secondary metabolite biosynthesis. Anthrone oxygenase; part of the gene cluster that mediates the biosynthesis of agnestins, dihydroxy-xanthone metabolites. The pathway begins with the assembly and cyclization of atrochrysone thioester by the non-reducing polyketide synthase Agnpks1. The atrochrysone carboxyl ACP thioesterase AgnL7 then breaks the thioester bond and releases the atrochrysone carboxylic acid as the first enzyme-free intermediate. The decarboxylase AgnL1 then catalyzes the concerted decarboxylation-elimination required to convert atochrysone carboxylic acid into emodin anthrone, which is further oxidized to emodin by the anthrone oxygenase AgnL2. Emodin then undergoes reduction catalyzed by the oxidoreductase AgnL4 to yield the dihydroquinone tautomer which is the substrate for reduction by the short chain dehydrogenase AgnL6 reduction to produce hydroxyketone, followed by AgnL8 dehydration and likely spontaneous autoxidation to chrysophanol. Baeyer-Villiger oxidation by the oxidase AgnL3 leads to monodictyphenone via cleavage of the C-10/C-10a bond of chrysophanol. Alternative cleavage at the C-4a/C-10 bond of chrysophanol also leads to the formation some cephalone F. Further conversion to agnestins A and B, requires reduction to dihydro-monodictyphenone, oxidation to agnestin C probably via an epoxide, and rearrangement to either agnestin A or agnestin B directly, although agnestin A or agnestin B can also interconvert. Within the cluster, AgnR1 is the only unassigned oxidoreductase present which could be involved in this conversion. However, AgnR1 seems not to be involved in this step, and thus genes involved in the proposed oxidation/reduction may be located elsewhere on the genome. Further agnestin A derivatives are probably formed by spontaneous decarboxylations, dehydrations and methanolysis reactions. This Paecilomyces divaricatus (Penicillium divaricatum) protein is Anthrone oxygenase AgnL2.